A 549-amino-acid chain; its full sequence is MTAKNIRRAYHVIRTALHYGLDDLIPSKLTPWYFKLFRYSFFWLRNQHKDKVGGERLKLAMQELGPVYIKFGQMLSTRRDLLSDEWAEELAMLQDRVPPFDSAIARASIETELNAPIESYFNDFDDIPLASASISQVHTATLKSNGAAVVLKILRPDVEQKVHADLLLMSQAADFLETLLGTNNRLRPAEVVEDYRTTIEGELNLKLEALNAIKLRNNFIDSNALYIPYMYEELCFTRLIVMERIDGIPVSDKVALEAQGTNLKLLAERGVELFFTQVFRDNFFHADMHPGNIFVSREHPNDPLYIGLDCGIMGTLTEEDKRYLAENFLAFFNRDYRRIAQLYIESGWVSPDTDVAAFEQAVKVVCEPMFNKPLDEISFGHVLLELFRTARRFDMVVQPQLVLLEKTLLYIEGLGRQLYPQLDLWQTAKPFLEQWMAEQVGPKVMAAKVKQKLPYWAEHLPELPELIYDNLKMGRNLSKNQNNLLDRYLKHQQKAHKSNYLLITSAILVICGTILINQDATLWPSYGSIGTGIALWVLGWRSRPKNRKI.

The Protein kinase domain maps to 123-501; that stretch reads DFDDIPLASA…QQKAHKSNYL (379 aa). Residues 129–137 and lysine 152 contribute to the ATP site; that span reads LASASISQV. The active-site Proton acceptor is aspartate 287. Transmembrane regions (helical) follow at residues 498 to 518 and 520 to 540; these read SNYL…LINQ and ATLW…VLGW.

Belongs to the ABC1 family. UbiB subfamily.

It is found in the cell inner membrane. It functions in the pathway cofactor biosynthesis; ubiquinone biosynthesis [regulation]. Is probably a protein kinase regulator of UbiI activity which is involved in aerobic coenzyme Q (ubiquinone) biosynthesis. The chain is Probable protein kinase UbiB from Shewanella halifaxensis (strain HAW-EB4).